Here is a 204-residue protein sequence, read N- to C-terminus: Ricin B-like lectin R40G3 (204 aa).

The 147-residue stretch at 54–200 folds into the Ricin B-type lectin domain; that stretch reads TVKVYCRANP…CEGDNQRWKI (147 aa).

In terms of tissue distribution, expressed in shoots and lamina.

Lectin which binds carbohydrates in vitro. Interacts through its lectin domain with glycan structures containing specific motifs. The chain is Ricin B-like lectin R40G3 from Oryza sativa subsp. japonica (Rice).